Here is a 143-residue protein sequence, read N- to C-terminus: Transcriptional regulator MraZ (143 aa).

SpoVT-AbrB domains lie at 5 to 47 and 76 to 119; these read EYEH…PRSV and AADM…APRR.

This sequence belongs to the MraZ family. In terms of assembly, forms oligomers.

The protein resides in the cytoplasm. The protein localises to the nucleoid. This chain is Transcriptional regulator MraZ, found in Roseiflexus sp. (strain RS-1).